A 1586-amino-acid polypeptide reads, in one-letter code: Pentafunctional AROM polypeptide (1586 aa).

A 3-dehydroquinate synthase region spans residues 1–384 (MSEPTKISIL…HEPKASVVSN (384 aa)). NAD(+)-binding positions include 44 to 46 (DTN), 81 to 84 (ESSK), 114 to 116 (GGV), and D119. Position 130 (R130) interacts with 7-phospho-2-dehydro-3-deoxy-D-arabino-heptonate. NAD(+) is bound at residue 139 to 140 (TT). 7-phospho-2-dehydro-3-deoxy-D-arabino-heptonate is bound by residues D146 and K152. K161 contributes to the NAD(+) binding site. N162 is a 7-phospho-2-dehydro-3-deoxy-D-arabino-heptonate binding site. NAD(+)-binding positions include 179–182 (FLET) and N190. Zn(2+) is bound at residue E194. Residues 194–197 (EVIK) and K250 each bind 7-phospho-2-dehydro-3-deoxy-D-arabino-heptonate. E260 acts as the Proton acceptor; for 3-dehydroquinate synthase activity in catalysis. 7-phospho-2-dehydro-3-deoxy-D-arabino-heptonate-binding positions include 264-268 (RNLLN) and H271. A Zn(2+)-binding site is contributed by H271. The active-site Proton acceptor; for 3-dehydroquinate synthase activity is H275. The 7-phospho-2-dehydro-3-deoxy-D-arabino-heptonate site is built by H287 and K356. Residue H287 participates in Zn(2+) binding. The tract at residues 397–842 (VHPGVPKSLN…WDALKQMFSV (446 aa)) is EPSP synthase. The active-site For EPSP synthase activity is the C824. The shikimate kinase stretch occupies residues 864–1056 (SASVFIIGMR…KKKKHSFFVS (193 aa)). Residue 871–878 (GMRGAGKT) participates in ATP binding. Positions 1057–1277 (LTLPDVEPSG…AAPGQLSAAE (221 aa)) are 3-dehydroquinase. H1180 acts as the Proton acceptor; for 3-dehydroquinate dehydratase activity in catalysis. K1208 acts as the Schiff-base intermediate with substrate; for 3-dehydroquinate dehydratase activity in catalysis. The tract at residues 1290 to 1586 (AQKFAIFGSP…SKHLDYFLSF (297 aa)) is shikimate dehydrogenase.

The protein in the N-terminal section; belongs to the sugar phosphate cyclases superfamily. Dehydroquinate synthase family. In the 2nd section; belongs to the EPSP synthase family. This sequence in the 3rd section; belongs to the shikimate kinase family. It in the 4th section; belongs to the type-I 3-dehydroquinase family. The protein in the C-terminal section; belongs to the shikimate dehydrogenase family. As to quaternary structure, homodimer. Requires Zn(2+) as cofactor.

It is found in the cytoplasm. It carries out the reaction 7-phospho-2-dehydro-3-deoxy-D-arabino-heptonate = 3-dehydroquinate + phosphate. The enzyme catalyses 3-dehydroquinate = 3-dehydroshikimate + H2O. It catalyses the reaction shikimate + NADP(+) = 3-dehydroshikimate + NADPH + H(+). The catalysed reaction is shikimate + ATP = 3-phosphoshikimate + ADP + H(+). It carries out the reaction 3-phosphoshikimate + phosphoenolpyruvate = 5-O-(1-carboxyvinyl)-3-phosphoshikimate + phosphate. The protein operates within metabolic intermediate biosynthesis; chorismate biosynthesis; chorismate from D-erythrose 4-phosphate and phosphoenolpyruvate: step 2/7. It participates in metabolic intermediate biosynthesis; chorismate biosynthesis; chorismate from D-erythrose 4-phosphate and phosphoenolpyruvate: step 3/7. It functions in the pathway metabolic intermediate biosynthesis; chorismate biosynthesis; chorismate from D-erythrose 4-phosphate and phosphoenolpyruvate: step 4/7. Its pathway is metabolic intermediate biosynthesis; chorismate biosynthesis; chorismate from D-erythrose 4-phosphate and phosphoenolpyruvate: step 5/7. The protein operates within metabolic intermediate biosynthesis; chorismate biosynthesis; chorismate from D-erythrose 4-phosphate and phosphoenolpyruvate: step 6/7. Its function is as follows. The AROM polypeptide catalyzes 5 consecutive enzymatic reactions in prechorismate polyaromatic amino acid biosynthesis. This Penicillium rubens (strain ATCC 28089 / DSM 1075 / NRRL 1951 / Wisconsin 54-1255) (Penicillium chrysogenum) protein is Pentafunctional AROM polypeptide.